Reading from the N-terminus, the 171-residue chain is Large ribosomal subunit protein uL10 (171 aa).

The protein belongs to the universal ribosomal protein uL10 family. In terms of assembly, part of the ribosomal stalk of the 50S ribosomal subunit. The N-terminus interacts with L11 and the large rRNA to form the base of the stalk. The C-terminus forms an elongated spine to which L12 dimers bind in a sequential fashion forming a multimeric L10(L12)X complex.

Functionally, forms part of the ribosomal stalk, playing a central role in the interaction of the ribosome with GTP-bound translation factors. The protein is Large ribosomal subunit protein uL10 of Rhizorhabdus wittichii (strain DSM 6014 / CCUG 31198 / JCM 15750 / NBRC 105917 / EY 4224 / RW1) (Sphingomonas wittichii).